The sequence spans 283 residues: Protein FDD123 (283 aa).

The next 7 membrane-spanning stretches (helical) occupy residues 24 to 44 (WLWA…AWTF), 52 to 72 (LFHQ…FSMA), 97 to 117 (YIQW…ATGL), 122 to 142 (IFTT…AALV), 148 to 168 (WGYY…LLWH), 185 to 205 (ILAA…WACA), and 217 to 237 (MIWY…FFLW).

Belongs to the archaeal/bacterial/fungal opsin family.

It localises to the membrane. This is Protein FDD123 (FDD123) from Trametes versicolor (White-rot fungus).